The chain runs to 61 residues: Small ribosomal subunit protein uS14B (61 aa).

Residues Cys24, Cys27, Cys40, and Cys43 each coordinate Zn(2+).

Belongs to the universal ribosomal protein uS14 family. Zinc-binding uS14 subfamily. In terms of assembly, part of the 30S ribosomal subunit. Contacts proteins S3 and S10. It depends on Zn(2+) as a cofactor.

Binds 16S rRNA, required for the assembly of 30S particles and may also be responsible for determining the conformation of the 16S rRNA at the A site. This chain is Small ribosomal subunit protein uS14B, found in Cutibacterium acnes (strain DSM 16379 / KPA171202) (Propionibacterium acnes).